A 1427-amino-acid polypeptide reads, in one-letter code: DNA-directed RNA polymerase subunit beta' (1427 aa).

Zn(2+) is bound by residues cysteine 70, cysteine 72, cysteine 85, and cysteine 88. Aspartate 461, aspartate 463, and aspartate 465 together coordinate Mg(2+). 4 residues coordinate Zn(2+): cysteine 838, cysteine 912, cysteine 919, and cysteine 922.

Belongs to the RNA polymerase beta' chain family. In terms of assembly, the RNAP catalytic core consists of 2 alpha, 1 beta, 1 beta' and 1 omega subunit. When a sigma factor is associated with the core the holoenzyme is formed, which can initiate transcription. Mg(2+) is required as a cofactor. Requires Zn(2+) as cofactor.

The catalysed reaction is RNA(n) + a ribonucleoside 5'-triphosphate = RNA(n+1) + diphosphate. DNA-dependent RNA polymerase catalyzes the transcription of DNA into RNA using the four ribonucleoside triphosphates as substrates. The chain is DNA-directed RNA polymerase subunit beta' from Sorangium cellulosum (strain So ce56) (Polyangium cellulosum (strain So ce56)).